Here is a 569-residue protein sequence, read N- to C-terminus: Pyruvate decarboxylase (569 aa).

The pyruvate site is built by Asp38 and His124. Residues Thr398 and 421 to 423 (GSI) contribute to the thiamine diphosphate site. Asp451 contributes to the Mg(2+) binding site. Thiamine diphosphate contacts are provided by residues 452 to 453 (GS) and 478 to 483 (NQGYTI). Positions 478 and 480 each coordinate Mg(2+). Glu484 contacts pyruvate.

The protein belongs to the TPP enzyme family. As to quaternary structure, homotetramer. Mg(2+) is required as a cofactor. Requires thiamine diphosphate as cofactor.

The enzyme catalyses a 2-oxocarboxylate + H(+) = an aldehyde + CO2. The catalysed reaction is pyruvate + H(+) = acetaldehyde + CO2. In Aspergillus terreus (strain NIH 2624 / FGSC A1156), this protein is Pyruvate decarboxylase (pdcA).